The following is a 1067-amino-acid chain: Probable importin subunit beta-4 (1067 aa).

One can recognise an Importin N-terminal domain in the interval 27 to 94 (ATRALETKYL…RSNLLDITLK (68 aa)). HEAT repeat units lie at residues 159 to 196 (KLLLDFVNLFSQTITDSSRTVRVTSVQGLGAIAEVLES), 379 to 416 (GNLPNIFPIIINGLCDNDMDVRQAALLALSQIAVEIPT), 420 to 457 (KHHAQLLPLVFELMSTQGVKVGKSACNCIDALLEGLDK), 591 to 633 (PFLE…SVET), 890 to 927 (PFTRDVFSLFMAALEDSEGEVRSNAAYSMGLLCQFSTE), and 1013 to 1050 (QHLGELIPVFASVLTGSPEQLNDELRSELLSMVKEIAP).

This sequence belongs to the importin beta family.

It is found in the cytoplasm. The protein resides in the nucleus. It localises to the nucleus envelope. In terms of biological role, required for nuclear protein import, its predominant substrate seems to be ribosomal proteins. Binds to nucleoporins and the GTP-bound form of gsp1 (Ran). This Schizosaccharomyces pombe (strain 972 / ATCC 24843) (Fission yeast) protein is Probable importin subunit beta-4 (kap123).